The chain runs to 401 residues: Phosphoglycerate kinase (401 aa).

Residues 21 to 23 (DFN), Arg36, 59 to 62 (HLGR), Arg119, and Arg160 contribute to the substrate site. ATP-binding positions include Lys212, Glu330, and 357 to 360 (GGDS).

It belongs to the phosphoglycerate kinase family. In terms of assembly, monomer.

It is found in the cytoplasm. The catalysed reaction is (2R)-3-phosphoglycerate + ATP = (2R)-3-phospho-glyceroyl phosphate + ADP. It functions in the pathway carbohydrate degradation; glycolysis; pyruvate from D-glyceraldehyde 3-phosphate: step 2/5. This Limosilactobacillus fermentum (strain NBRC 3956 / LMG 18251) (Lactobacillus fermentum) protein is Phosphoglycerate kinase.